Here is a 79-residue protein sequence, read N- to C-terminus: MAKAELRKPKPKSNPLKAAKITEIDYKDVALLRKFISDRGKIRARRVTGVTVQEQRKIAQAVKNAREVALLPYAGAGRG.

This sequence belongs to the bacterial ribosomal protein bS18 family. As to quaternary structure, part of the 30S ribosomal subunit. Forms a tight heterodimer with protein bS6.

Binds as a heterodimer with protein bS6 to the central domain of the 16S rRNA, where it helps stabilize the platform of the 30S subunit. In Micrococcus luteus (strain ATCC 4698 / DSM 20030 / JCM 1464 / CCM 169 / CCUG 5858 / IAM 1056 / NBRC 3333 / NCIMB 9278 / NCTC 2665 / VKM Ac-2230) (Micrococcus lysodeikticus), this protein is Small ribosomal subunit protein bS18.